The following is a 404-amino-acid chain: Acetate kinase (404 aa).

Asn-7 lines the Mg(2+) pocket. Residue Lys-14 participates in ATP binding. Residue Arg-95 participates in substrate binding. Catalysis depends on Asp-152, which acts as the Proton donor/acceptor. ATP contacts are provided by residues 212–216, 286–288, and 334–338; these read HLGNG, DMR, and GIGEN. Glu-388 serves as a coordination point for Mg(2+).

Belongs to the acetokinase family. Homodimer. It depends on Mg(2+) as a cofactor. Requires Mn(2+) as cofactor.

It localises to the cytoplasm. The enzyme catalyses acetate + ATP = acetyl phosphate + ADP. It participates in metabolic intermediate biosynthesis; acetyl-CoA biosynthesis; acetyl-CoA from acetate: step 1/2. In terms of biological role, catalyzes the formation of acetyl phosphate from acetate and ATP. Can also catalyze the reverse reaction. The polypeptide is Acetate kinase (Lawsonia intracellularis (strain PHE/MN1-00)).